The following is a 189-amino-acid chain: Large ribosomal subunit protein eL18 (189 aa).

Belongs to the eukaryotic ribosomal protein eL18 family.

It is found in the cytoplasm. This is Large ribosomal subunit protein eL18 (RpL18) from Aedes aegypti (Yellowfever mosquito).